Reading from the N-terminus, the 231-residue chain is Homeobox protein EMX1 (231 aa).

Residues 133–192 (PKRIRTAFSPSQLLRLERAFEKNHYVVGAERKQLANSLSLSETQVKVWFQNRRTKYKRQK) constitute a DNA-binding region (homeobox). The disordered stretch occupies residues 193-231 (LEEEGPECTQKKKGNHHINRWRIATKQTGSEDIDVMSDA). Over residues 203-212 (KKKGNHHINR) the composition is skewed to basic residues.

It belongs to the EMX homeobox family.

The protein localises to the nucleus. Its function is as follows. May function in combinations with OTX1/2 to specify cell fates in the developing central nervous system. The sequence is that of Homeobox protein EMX1 (emx1) from Danio rerio (Zebrafish).